The chain runs to 94 residues: DNA-directed RNA polymerase subunit Rpo11 (94 aa).

Belongs to the archaeal Rpo11/eukaryotic RPB11/RPC19 RNA polymerase subunit family. In terms of assembly, part of the RNA polymerase complex.

It is found in the cytoplasm. The catalysed reaction is RNA(n) + a ribonucleoside 5'-triphosphate = RNA(n+1) + diphosphate. In terms of biological role, DNA-dependent RNA polymerase (RNAP) catalyzes the transcription of DNA into RNA using the four ribonucleoside triphosphates as substrates. This chain is DNA-directed RNA polymerase subunit Rpo11, found in Halobacterium salinarum (strain ATCC 700922 / JCM 11081 / NRC-1) (Halobacterium halobium).